The chain runs to 285 residues: OPEP-3 protein (285 aa).

The sequence is that of OPEP-3 protein (OPEP-3) from Orgyia pseudotsugata multicapsid polyhedrosis virus (OpMNPV).